The sequence spans 463 residues: MTQDGTWVDESDWQLDDSEIAESGAAPVVAVVGRPNVGKSTLVNRILGRREAVVQDIPGVTRDRVCYDALWTGRRFVVQDTGGWEPNAKGLQRLVAEQASVAMRTADAVILVVDAGVGATAADEAAARILLRSGKPVFLAANKVDSEKGESDAAALWSLGLGEPHAISAMHGRGVADLLDGVLAALPEVGESASASGGPRRVALVGKPNVGKSSLLNKLAGDQRSVVHEAAGTTVDPVDSLIELGGDVWRFVDTAGLRRKVGQASGHEFYASVRTHAAIDSAEVAIVLIDASQPLTEQDLRVISMVIEAGRALVLAYNKWDLVDEDRRELLQREIDRELVQVRWAQRVNISAKTGRAVHKLVPAMEDALASWDTRIATGPLNTWLTEVTAATPPPVRGGKQPRILFATQATARPPTFVLFTTGFLEAGYRRFLERRLRETFGFDGSPIRVNVRVREKRAGKRR.

2 consecutive EngA-type G domains span residues P27 to G190 and R200 to D373. GTP is bound by residues G33–S40, D80–W84, N142–D145, G206–S213, D253–L257, and N318–D321. The KH-like domain occupies T374–E456.

The protein belongs to the TRAFAC class TrmE-Era-EngA-EngB-Septin-like GTPase superfamily. EngA (Der) GTPase family. In terms of assembly, associates with the 50S ribosomal subunit.

Its function is as follows. GTPase that plays an essential role in the late steps of ribosome biogenesis. The sequence is that of GTPase Der from Mycobacterium bovis (strain ATCC BAA-935 / AF2122/97).